Here is a 94-residue protein sequence, read N- to C-terminus: Phosphoribosyl-ATP pyrophosphatase (94 aa).

It belongs to the PRA-PH family.

It is found in the cytoplasm. The enzyme catalyses 1-(5-phospho-beta-D-ribosyl)-ATP + H2O = 1-(5-phospho-beta-D-ribosyl)-5'-AMP + diphosphate + H(+). The protein operates within amino-acid biosynthesis; L-histidine biosynthesis; L-histidine from 5-phospho-alpha-D-ribose 1-diphosphate: step 2/9. The polypeptide is Phosphoribosyl-ATP pyrophosphatase (Pyrobaculum calidifontis (strain DSM 21063 / JCM 11548 / VA1)).